Consider the following 373-residue polypeptide: tRNA 2-selenouridine synthase (373 aa).

A Rhodanese domain is found at 12–136; it reads FINDRPMMDA…MRGFLLETTE (125 aa). The active-site S-selanylcysteine intermediate is the cysteine 95.

The protein belongs to the SelU family. As to quaternary structure, monomer.

The catalysed reaction is 5-methylaminomethyl-2-thiouridine(34) in tRNA + selenophosphate + (2E)-geranyl diphosphate + H2O + H(+) = 5-methylaminomethyl-2-selenouridine(34) in tRNA + (2E)-thiogeraniol + phosphate + diphosphate. The enzyme catalyses 5-methylaminomethyl-2-thiouridine(34) in tRNA + (2E)-geranyl diphosphate = 5-methylaminomethyl-S-(2E)-geranyl-thiouridine(34) in tRNA + diphosphate. It carries out the reaction 5-methylaminomethyl-S-(2E)-geranyl-thiouridine(34) in tRNA + selenophosphate + H(+) = 5-methylaminomethyl-2-(Se-phospho)selenouridine(34) in tRNA + (2E)-thiogeraniol. It catalyses the reaction 5-methylaminomethyl-2-(Se-phospho)selenouridine(34) in tRNA + H2O = 5-methylaminomethyl-2-selenouridine(34) in tRNA + phosphate. Functionally, involved in the post-transcriptional modification of the uridine at the wobble position (U34) of tRNA(Lys), tRNA(Glu) and tRNA(Gln). Catalyzes the conversion of 2-thiouridine (S2U-RNA) to 2-selenouridine (Se2U-RNA). Acts in a two-step process involving geranylation of 2-thiouridine (S2U) to S-geranyl-2-thiouridine (geS2U) and subsequent selenation of the latter derivative to 2-selenouridine (Se2U) in the tRNA chain. The chain is tRNA 2-selenouridine synthase from Ectopseudomonas mendocina (strain ymp) (Pseudomonas mendocina).